Reading from the N-terminus, the 360-residue chain is DNA replication and repair protein RecF (360 aa).

30–37 (GQNGSGKT) lines the ATP pocket.

The protein belongs to the RecF family.

The protein localises to the cytoplasm. Its function is as follows. The RecF protein is involved in DNA metabolism; it is required for DNA replication and normal SOS inducibility. RecF binds preferentially to single-stranded, linear DNA. It also seems to bind ATP. In Shewanella baltica (strain OS185), this protein is DNA replication and repair protein RecF.